The sequence spans 397 residues: Elongation factor Tu (397 aa).

The region spanning 10-206 (KPHVNIGTIG…AVDTAIPEPE (197 aa)) is the tr-type G domain. A G1 region spans residues 19 to 26 (GHIDHGKT). 19–26 (GHIDHGKT) serves as a coordination point for GTP. T26 lines the Mg(2+) pocket. The interval 62-66 (GITIS) is G2. Positions 83–86 (DCPG) are G3. Residues 83–87 (DCPGH) and 138–141 (NKAD) contribute to the GTP site. The segment at 138–141 (NKAD) is G4. The segment at 176–178 (SAL) is G5.

It belongs to the TRAFAC class translation factor GTPase superfamily. Classic translation factor GTPase family. EF-Tu/EF-1A subfamily. Monomer.

Its subcellular location is the cytoplasm. It catalyses the reaction GTP + H2O = GDP + phosphate + H(+). Functionally, GTP hydrolase that promotes the GTP-dependent binding of aminoacyl-tRNA to the A-site of ribosomes during protein biosynthesis. The chain is Elongation factor Tu from Kineococcus radiotolerans (strain ATCC BAA-149 / DSM 14245 / SRS30216).